The sequence spans 86 residues: Omega-theraphotoxin-Hhn1a 1 (86 aa).

A signal peptide spans 1–21 (MKSIVFVALFGLALLAVVCSA). Positions 22-50 (SEDAHKELLKEVVRAMVVDKTDAVQAEER) are excised as a propeptide. Cystine bridges form between Cys-52–Cys-66, Cys-59–Cys-71, and Cys-65–Cys-78.

It belongs to the neurotoxin 10 (Hwtx-1) family. 17 (Hntx-9) subfamily. As to expression, expressed by the venom gland.

The protein localises to the secreted. Functionally, ion channel inhibitor. The polypeptide is Omega-theraphotoxin-Hhn1a 1 (Cyriopagopus hainanus (Chinese bird spider)).